The sequence spans 366 residues: ACP-SH:acetate ligase (366 aa).

It localises to the cytoplasm. It catalyses the reaction holo-[ACP] + acetate + ATP = acetyl-[ACP] + AMP + diphosphate. Acyl-carrier protein (ACP) acetate ligase of the biotin-dependent malonate decarboxylase multienzyme complex (EC 7.2.4.4). Involved in the conversion of the thiol group of the ACP-bound 2'-(5-phosphoribosyl)-3'-dephospho-CoA prosthetic group into its acetyl thioester using the energy from the hydrolysis of ATP. The polypeptide is ACP-SH:acetate ligase (madH) (Malonomonas rubra).